The chain runs to 125 residues: Ribonuclease P protein component (125 aa).

This sequence belongs to the RnpA family. In terms of assembly, consists of a catalytic RNA component (M1 or rnpB) and a protein subunit.

It carries out the reaction Endonucleolytic cleavage of RNA, removing 5'-extranucleotides from tRNA precursor.. Functionally, RNaseP catalyzes the removal of the 5'-leader sequence from pre-tRNA to produce the mature 5'-terminus. It can also cleave other RNA substrates such as 4.5S RNA. The protein component plays an auxiliary but essential role in vivo by binding to the 5'-leader sequence and broadening the substrate specificity of the ribozyme. This chain is Ribonuclease P protein component, found in Clostridium botulinum (strain Alaska E43 / Type E3).